A 233-amino-acid polypeptide reads, in one-letter code: Protein lin-7 homolog A (233 aa).

Residues 14–28 carry the Kinase interacting site motif; it reads MATLTVVQPLTLDRD. The 56-residue stretch at 25 to 80 folds into the L27 domain; the sequence is LDRDVARAIELLEKLQESGEVPVHKLQSLKKVLQSEFCTAIREVYQYMHETITVNG. The 83-residue stretch at 108–190 folds into the PDZ domain; sequence VVELPKTDEG…SVKLVVRYTP (83 aa). The segment at 214 to 233 is disordered; sequence LLIQQQQQQQQQQPQQNHMS.

The protein belongs to the lin-7 family. As to quaternary structure, forms a complex with CASK and CASKIN1. Component of the brain-specific heterotrimeric complex (LIN-10-LIN-2-LIN-7 complex) composed of at least APBA1, CASK, and LIN7, which associates with the motor protein KIF17 to transport vesicles along microtubules. Can also interact with other modular proteins containing protein-protein interaction domains like PALS1, PALS2, MPP7, DLG1, DLG2 and DLG3 through its L27 domain. Interacts with DLG4, GRIN2B and MARCHF11 as well as CDH1 and CTNNB1, the channels KCNJ12/Kir2.2, KCNJ4/Kir2.3 and probably KCNJ2/Kir2.1 and SLC6A12/BGT-1 via its PDZ domain. The association of LIN7A with cadherin and beta-catenin is calcium-dependent, occurs at synaptic junctions and requires the actin cytoskeleton. Interacts with EGFR, ERBB2, ERBB3 and ERBB4 with both PDZ and KID domains. Associates with KIF17 via APBA1. Interacts with HTR4. Forms a tripartite complex composed of DLG1, MPP7 and LIN7 (LIN7A or LIN7C). Expressed in the kidney, along the length of the nephron.

It localises to the cell membrane. Its subcellular location is the basolateral cell membrane. The protein localises to the cell junction. It is found in the postsynaptic density membrane. The protein resides in the tight junction. Its function is as follows. Plays a role in establishing and maintaining the asymmetric distribution of channels and receptors at the plasma membrane of polarized cells. Forms membrane-associated multiprotein complexes that may regulate delivery and recycling of proteins to the correct membrane domains. The tripartite complex composed of LIN7 (LIN7A, LIN7B or LIN7C), CASK and APBA1 associates with the motor protein KIF17 to transport vesicles containing N-methyl-D-aspartate (NMDA) receptor subunit NR2B along microtubules. This complex may have the potential to couple synaptic vesicle exocytosis to cell adhesion in brain. Ensures the proper localization of GRIN2B (subunit 2B of the NMDA receptor) to neuronal postsynaptic density and may function in localizing synaptic vesicles at synapses where it is recruited by beta-catenin and cadherin. Required to localize Kir2 channels, GABA transporter (SLC6A12) and EGFR/ERBB1, ERBB2, ERBB3 and ERBB4 to the basolateral membrane of epithelial cells. This Mus musculus (Mouse) protein is Protein lin-7 homolog A (Lin7a).